A 284-amino-acid polypeptide reads, in one-letter code: Nodulation protein O (284 aa).

The tract at residues 1–27 (MNIKGSDNGSFIKGSPENDIIDGGKKN) is disordered. Hemolysin-type calcium-binding repeat units lie at residues 13–30 (KGSP…NDWI), 31–48 (DAGN…QDSI), 58–75 (WAGK…DDLL), 94–111 (HSGE…SDIL), and 112–129 (VAGD…GDAF). Positions 100, 109, 118, and 127 each coordinate Ca(2+). The export signal (aspartic acid box) stretch occupies residues 208–222 (DRGFASAAAAATAID).

The protein localises to the secreted. In terms of biological role, the NodO protein may play a role in nodule development by direct interaction with the root hair cells or some other plant surface in a calcium-dependent manner. The protein is Nodulation protein O (nodO) of Rhizobium leguminosarum bv. viciae.